Here is a 312-residue protein sequence, read N- to C-terminus: Malate dehydrogenase (312 aa).

Residues 12–17 and Asp36 contribute to the NAD(+) site; that span reads GAGFTG. Substrate-binding residues include Arg87 and Arg93. NAD(+) contacts are provided by residues Asn100 and 123-125; that span reads LTN. A substrate-binding site is contributed by Asn125. Ser149 is subject to Phosphoserine. Arg156 lines the substrate pocket. The Proton acceptor role is filled by His180.

It belongs to the LDH/MDH superfamily. MDH type 3 family.

The enzyme catalyses (S)-malate + NAD(+) = oxaloacetate + NADH + H(+). Catalyzes the reversible oxidation of malate to oxaloacetate. This chain is Malate dehydrogenase, found in Bacillus pumilus (strain SAFR-032).